Reading from the N-terminus, the 355-residue chain is Uroporphyrinogen decarboxylase (355 aa).

Substrate contacts are provided by residues 27-31 (RQAGR), aspartate 77, tyrosine 154, threonine 209, and histidine 328.

This sequence belongs to the uroporphyrinogen decarboxylase family. In terms of assembly, homodimer.

The protein localises to the cytoplasm. It catalyses the reaction uroporphyrinogen III + 4 H(+) = coproporphyrinogen III + 4 CO2. Its pathway is porphyrin-containing compound metabolism; protoporphyrin-IX biosynthesis; coproporphyrinogen-III from 5-aminolevulinate: step 4/4. In terms of biological role, catalyzes the decarboxylation of four acetate groups of uroporphyrinogen-III to yield coproporphyrinogen-III. This is Uroporphyrinogen decarboxylase from Aliivibrio fischeri (strain ATCC 700601 / ES114) (Vibrio fischeri).